The primary structure comprises 243 residues: NAD-dependent protein deacetylase (243 aa).

In terms of domain architecture, Deacetylase sirtuin-type spans 1–243 (MKHDLETLKH…VSVVKSLMTE (243 aa)). Residues A24, F35, R36, Q105, I107, D108, and H123 each coordinate NAD(+). F35 is a binding site for nicotinamide. Residues I107 and D108 each coordinate nicotinamide. Residue H123 is the Proton acceptor of the active site. C131, C134, C151, and C154 together coordinate Zn(2+). S192, S193, N215, and D232 together coordinate NAD(+).

This sequence belongs to the sirtuin family. Class U subfamily. Requires Zn(2+) as cofactor.

Its subcellular location is the cytoplasm. The enzyme catalyses N(6)-acetyl-L-lysyl-[protein] + NAD(+) + H2O = 2''-O-acetyl-ADP-D-ribose + nicotinamide + L-lysyl-[protein]. In terms of biological role, NAD-dependent protein deacetylase which modulates the activities of several enzymes which are inactive in their acetylated form. The chain is NAD-dependent protein deacetylase from Staphylococcus aureus (strain NCTC 8325 / PS 47).